The chain runs to 357 residues: MKPATVKISSVALKHNIQIIKQKAPHSKIIAVVKANAYGHGVEFVSSTLENLVDGFGVARLAEALSVRSNGVTKPILLLEGFFSPKDLPILSVNNIQTVVHNQDQLDAIKRANLENPIKVWLKIDTGMHRLGVSLEEVDYYYNELMNCPNVDEVGFVSHFSRADETDSDYTNIQLNRFLDATKNKKGNRTIAASGGILFWEDSHLEYIRPGIIMYGVSPINIPSSEYGLIPVMTLTSSLIAVRDHKKGEPVGYGGIWVSERDTKIGVVAIGYGDGYPRNVPAGTPIYINGRRVPIVGRVSMDMVTVDLGPDCKDKVGDEAVLWGKELPIEEVAEITGLLSYELMTKLTPRVLTEYVD.

Lysine 34 functions as the Proton acceptor; specific for D-alanine in the catalytic mechanism. Lysine 34 carries the N6-(pyridoxal phosphate)lysine modification. A substrate-binding site is contributed by arginine 130. Residue tyrosine 253 is the Proton acceptor; specific for L-alanine of the active site. Methionine 301 contacts substrate.

This sequence belongs to the alanine racemase family. It depends on pyridoxal 5'-phosphate as a cofactor.

The enzyme catalyses L-alanine = D-alanine. Its pathway is amino-acid biosynthesis; D-alanine biosynthesis; D-alanine from L-alanine: step 1/1. Functionally, catalyzes the interconversion of L-alanine and D-alanine. May also act on other amino acids. The chain is Alanine racemase (alr) from Mannheimia succiniciproducens (strain KCTC 0769BP / MBEL55E).